The following is a 491-amino-acid chain: Probable cobyric acid synthase (491 aa).

The region spanning 252-444 is the GATase cobBQ-type domain; it reads PVEVNIVKFS…LHGILENFEF (193 aa). Catalysis depends on C330, which acts as the Nucleophile. H436 is an active-site residue.

This sequence belongs to the CobB/CobQ family. CobQ subfamily.

It participates in cofactor biosynthesis; adenosylcobalamin biosynthesis. In terms of biological role, catalyzes amidations at positions B, D, E, and G on adenosylcobyrinic A,C-diamide. NH(2) groups are provided by glutamine, and one molecule of ATP is hydrogenolyzed for each amidation. This Methanococcus vannielii (strain ATCC 35089 / DSM 1224 / JCM 13029 / OCM 148 / SB) protein is Probable cobyric acid synthase.